The primary structure comprises 121 residues: uncharacterized protein (121 aa).

This is an uncharacterized protein from Archaeoglobus fulgidus (strain ATCC 49558 / DSM 4304 / JCM 9628 / NBRC 100126 / VC-16).